Reading from the N-terminus, the 400-residue chain is Enoyl-[acyl-carrier-protein] reductase [NADH] (400 aa).

NAD(+) contacts are provided by residues 48–53 (GSSSGY), 74–75 (FE), 111–112 (DA), and 139–140 (LA). A substrate-binding site is contributed by Y225. The active-site Proton donor is Y235. NAD(+)-binding positions include K244 and 273–275 (VVT).

Belongs to the TER reductase family. Monomer.

The enzyme catalyses a 2,3-saturated acyl-[ACP] + NAD(+) = a (2E)-enoyl-[ACP] + NADH + H(+). Its pathway is lipid metabolism; fatty acid biosynthesis. Its function is as follows. Involved in the final reduction of the elongation cycle of fatty acid synthesis (FAS II). Catalyzes the reduction of a carbon-carbon double bond in an enoyl moiety that is covalently linked to an acyl carrier protein (ACP). This chain is Enoyl-[acyl-carrier-protein] reductase [NADH], found in Aliivibrio fischeri (strain ATCC 700601 / ES114) (Vibrio fischeri).